The following is a 510-amino-acid chain: DNA nucleotidylexotransferase (510 aa).

The short motif at 11 to 17 (PRRKQPK) is the Nuclear localization signal element. The BRCT domain maps to 27–124 (KYDIKFKDIA…QPVEIERKHR (98 aa)). Residues 254-258 (VGLRT) form an involved in DNA binding region. A 2'-deoxyribonucleoside 5'-triphosphate is bound by residues 329–334 (GFRRGN) and 338–341 (HDVD). Residues aspartate 339, aspartate 341, and aspartate 434 each coordinate Mg(2+). 449-450 (GW) contacts a 2'-deoxyribonucleoside 5'-triphosphate.

It belongs to the DNA polymerase type-X family. Mg(2+) is required as a cofactor.

The protein localises to the nucleus. The enzyme catalyses DNA(n) + a 2'-deoxyribonucleoside 5'-triphosphate = DNA(n+1) + diphosphate. Template-independent DNA polymerase which catalyzes the random addition of deoxynucleoside 5'-triphosphate to the 3'-end of a DNA initiator. One of the in vivo functions of this enzyme is the addition of nucleotides at the junction (N region) of rearranged Ig heavy chain and T-cell receptor gene segments during the maturation of B- and T-cells. The chain is DNA nucleotidylexotransferase (DNTT) from Ambystoma mexicanum (Axolotl).